Here is a 649-residue protein sequence, read N- to C-terminus: Transcription factor E2-alpha (649 aa).

Disordered stretches follow at residues 34–107, 127–206, 222–267, 291–325, and 339–382; these read GKGR…SERS, LPGE…SAKT, LHPS…GLQQ, SAAP…SSSG, and DHSS…DGGL. 2 stretches are compositionally biased toward polar residues: residues 56–76 and 85–94; these read SSGS…SRTY and SHNSLPSSTF. A compositionally biased stretch (low complexity) spans 127-143; the sequence is LPGELGLSSPGPLSPSG. Phosphoserine is present on residues serine 135 and serine 140. Polar residues predominate over residues 145–156; the sequence is KSGSQYYPSYPS. The Nuclear localization signal motif lies at 171 to 177; that stretch reads SKKVRKV. 2 stretches are compositionally biased toward low complexity: residues 182–193 and 242–259; these read PSSVYPSSSGDS and GDGS…SVGS. Positions 339 to 352 are enriched in low complexity; that stretch reads DHSSNNFSPSPSTP. Position 351 is a phosphothreonine (threonine 351). Serine 355 bears the Phosphoserine mark. At arginine 367 the chain carries Omega-N-methylarginine. A Phosphoserine modification is found at serine 375. Residues 385–420 are leucine-zipper; sequence LSKMEDRLDEAIHVLRSHAVGTASDLHGLLPGHGAL. The interval 431–547 is disordered; the sequence is GGRHAGLVGG…KAEREKERRV (117 aa). Over residues 448–469 the composition is skewed to polar residues; sequence TSGTSLLHTHASLPSQASSLPD. Residue lysine 494 forms a Glycyl lysine isopeptide (Lys-Gly) (interchain with G-Cter in SUMO2) linkage. A Phosphoserine modification is found at serine 524. Glutamate 529 bears the Phosphothreonine mark. Over residues 537–547 the composition is skewed to basic and acidic residues; sequence QKAEREKERRV. A bHLH domain is found at 544 to 597; the sequence is ERRVANNARERLRVRDINEAFKELGRMCQLHLSSEKPQTKLLILHQAVAVILSL. A Glycyl lysine isopeptide (Lys-Gly) (interchain with G-Cter in SUMO2) cross-link involves residue lysine 620.

As to quaternary structure, homodimer. Heterodimer; efficient DNA binding requires dimerization with another bHLH protein. Forms a heterodimer with TWIST1 and TWIST2. Forms a heterodimer with NEUROD1; the heterodimer is inhibited in presence of ID2, but not NR0B2, to E-box element. Forms a heterodimer with TCF15; the heterodimer binds E-box element. Forms a heterodimer with MYOG; heterodimerization enhances MYOG DNA-binding and transcriptional activities. Forms a heterodimer with ATOH8; repress transcription of TCF3 and TCF3-NEUROG3 dimer-induced transactivation of E box-dependent promoters. Component of a nuclear TAL-1 complex composed at least of CBFA2T3, LDB1, TAL1 and TCF3. Interacts with NEUROD2. Interacts with EP300. Interacts with PTF1A, TGFB1I1 and UBE2I. Interacts with BHLHA9. Interacts with ASB2; the interaction is mediated by SKP2 and targets TCF3 for Notch-induced proteasomal degradation. Interacts with transcription factor ASCL5/AmeloD. In terms of assembly, interacts with RALGAPA1. Interacts with FIGLA. Forms a heterodimer with ATOH7; required for ATOH7 DNA-binding. Post-translationally, phosphorylated following NGF stimulation. In terms of processing, undergoes Notch-induced ubiquitination and subsequent proteasomal degradation which is mediated by ASB1 or ASB2, the substrate-recognition components of probable ECS E3 ubiquitin-protein ligase complexes.

Its subcellular location is the nucleus. Transcriptional regulator. Involved in the initiation of neuronal differentiation and mesenchymal to epithelial transition. Heterodimers between TCF3 and tissue-specific basic helix-loop-helix (bHLH) proteins play major roles in determining tissue-specific cell fate during embryogenesis, like muscle or early B-cell differentiation. Together with TCF15, required for the mesenchymal to epithelial transition. Dimers bind DNA on E-box motifs: 5'-CANNTG-3'. Binds to the kappa-E2 site in the kappa immunoglobulin gene enhancer. Binds to IEB1 and IEB2, which are short DNA sequences in the insulin gene transcription control region. Functionally, facilitates ATOH7 binding to DNA at the consensus sequence 5'-CAGGTG-3', and positively regulates transcriptional activity. The polypeptide is Transcription factor E2-alpha (TCF3) (Mesocricetus auratus (Golden hamster)).